The sequence spans 256 residues: Alcohol dehydrogenase (256 aa).

Position 12 to 35 (12 to 35 (FVAGLGGIGLDTSKELLKRDLKNL)) interacts with NAD(+). A substrate-binding site is contributed by serine 140. Tyrosine 153 serves as the catalytic Proton acceptor.

Belongs to the short-chain dehydrogenases/reductases (SDR) family. As to quaternary structure, homodimer.

The catalysed reaction is a primary alcohol + NAD(+) = an aldehyde + NADH + H(+). It catalyses the reaction a secondary alcohol + NAD(+) = a ketone + NADH + H(+). The polypeptide is Alcohol dehydrogenase (Adh) (Drosophila sechellia (Fruit fly)).